The sequence spans 314 residues: L-lactate dehydrogenase 2 (314 aa).

NAD(+) contacts are provided by residues valine 16, aspartate 37, lysine 42, tyrosine 68, and 82–83; that span reads GL. Residues glutamine 85, arginine 91, and 123-126 each bind substrate; that span reads NPVD. Residues 121 to 123 and serine 146 each bind NAD(+); that span reads ATN. Substrate is bound at residue 151–154; that stretch reads DSAR. 2 residues coordinate beta-D-fructose 1,6-bisphosphate: arginine 156 and histidine 171. Residue histidine 178 is the Proton acceptor of the active site. Tyrosine 223 is subject to Phosphotyrosine. Position 232 (threonine 232) interacts with substrate.

It belongs to the LDH/MDH superfamily. LDH family. In terms of assembly, homotetramer.

It is found in the cytoplasm. It catalyses the reaction (S)-lactate + NAD(+) = pyruvate + NADH + H(+). The protein operates within fermentation; pyruvate fermentation to lactate; (S)-lactate from pyruvate: step 1/1. With respect to regulation, allosterically activated by fructose 1,6-bisphosphate (FBP). Its function is as follows. Catalyzes the conversion of lactate to pyruvate. In Bacillus cereus (strain ATCC 10987 / NRS 248), this protein is L-lactate dehydrogenase 2.